The sequence spans 953 residues: Coatomer subunit beta (953 aa).

HEAT repeat units follow at residues 17 to 54, 96 to 131, 132 to 168, 240 to 276, 277 to 314, 316 to 353, and 396 to 433; these read DSEP…NGEK, QEMI…KEAE, LLEP…NFEH, SERA…SAPT, AIKA…HPSH, RVLQ…SRNV, and DMAA…RFDN.

As to quaternary structure, oligomeric complex that consists of at least the alpha, beta, beta', gamma, delta, epsilon and zeta subunits.

Its subcellular location is the cytoplasm. It localises to the golgi apparatus membrane. The protein localises to the cytoplasmic vesicle. The protein resides in the COPI-coated vesicle membrane. Its function is as follows. The coatomer is a cytosolic protein complex that binds to dilysine motifs and reversibly associates with Golgi non-clathrin-coated vesicles, which further mediate biosynthetic protein transport from the ER, via the Golgi up to the trans Golgi network. Coatomer complex is required for budding from Golgi membranes, and is essential for the retrograde Golgi-to-ER transport of dilysine-tagged proteins. The protein is Coatomer subunit beta (COPB1) of Gallus gallus (Chicken).